The chain runs to 153 residues: UPF0225 protein ETA_15740 (153 aa).

The protein belongs to the UPF0225 family.

The polypeptide is UPF0225 protein ETA_15740 (Erwinia tasmaniensis (strain DSM 17950 / CFBP 7177 / CIP 109463 / NCPPB 4357 / Et1/99)).